A 331-amino-acid chain; its full sequence is tRNA N6-adenosine threonylcarbamoyltransferase (331 aa).

H108 and H112 together coordinate Fe cation. Residues L129–G133, D161, E178, and S258 each bind substrate. D286 is a binding site for Fe cation.

It belongs to the KAE1 / TsaD family. The cofactor is Fe(2+).

It is found in the cytoplasm. The enzyme catalyses L-threonylcarbamoyladenylate + adenosine(37) in tRNA = N(6)-L-threonylcarbamoyladenosine(37) in tRNA + AMP + H(+). In terms of biological role, required for the formation of a threonylcarbamoyl group on adenosine at position 37 (t(6)A37) in tRNAs that read codons beginning with adenine. Is probably involved in the transfer of the threonylcarbamoyl moiety of threonylcarbamoyl-AMP (TC-AMP) to the N6 group of A37. The sequence is that of tRNA N6-adenosine threonylcarbamoyltransferase from Caldivirga maquilingensis (strain ATCC 700844 / DSM 13496 / JCM 10307 / IC-167).